The following is a 197-amino-acid chain: RNA pyrophosphohydrolase (197 aa).

In terms of domain architecture, Nudix hydrolase spans 6-149; it reads GYRPNVGIVI…KRDVYRKAMK (144 aa). A Nudix box motif is present at residues 38-59; the sequence is GGINDGETPEQAMYRELYEEVG. Residues 165 to 197 form a disordered region; that stretch reads LSTNNNDEKKANYSAKKPYSPYRNQDKKRKTRV.

Belongs to the Nudix hydrolase family. RppH subfamily. A divalent metal cation is required as a cofactor.

Functionally, accelerates the degradation of transcripts by removing pyrophosphate from the 5'-end of triphosphorylated RNA, leading to a more labile monophosphorylated state that can stimulate subsequent ribonuclease cleavage. This Mannheimia succiniciproducens (strain KCTC 0769BP / MBEL55E) protein is RNA pyrophosphohydrolase.